The sequence spans 392 residues: 2'-deamino-2'-hydroxyneamine transaminase (392 aa).

Lys249 bears the N6-(pyridoxal phosphate)lysine mark.

It belongs to the class-III pyridoxal-phosphate-dependent aminotransferase family. Requires pyridoxal 5'-phosphate as cofactor.

It catalyses the reaction neamine + 2-oxoglutarate = 6'-oxoparomamine + L-glutamate. The catalysed reaction is 2'-deamino-2'-hydroxyneamine + 2-oxoglutarate = 2'-deamino-2'-hydroxy-6'-dehydroparomamine + L-glutamate. The protein operates within antibiotic biosynthesis; kanamycin biosynthesis. Aminotransferase that has 6'-oxoglucosaminyl:L-glutamate aminotransferase activity by catalyzing pyridoxal-5'-phosphate-mediated transamination leading to the conversion of paromamine to neamine in the biosynthetic pathway of kanamycin B. The chain is 2'-deamino-2'-hydroxyneamine transaminase (kacL) from Streptomyces kanamyceticus.